Here is a 697-residue protein sequence, read N- to C-terminus: uncharacterized protein (697 aa).

Transmembrane regions (helical) follow at residues 45–65 (LCAV…LALL), 86–106 (TVAA…MGVV), 128–148 (VVVS…GMLA), 198–218 (VLLG…WWAL), and 280–300 (HLAI…ILAG). ABC transporter domains follow at residues 251–473 (VRLD…QPQH) and 477–696 (LELV…AGGM). Residues 285-292 (GANGSGKT) and 514-521 (GGNGSGKS) each bind ATP. The helical transmembrane segment at 522–542 (TLAWIMAGLTIPTTGACLLDG) threads the bilayer.

The protein belongs to the ABC transporter superfamily.

The protein resides in the cell membrane. This is an uncharacterized protein from Mycobacterium tuberculosis (strain CDC 1551 / Oshkosh).